The chain runs to 306 residues: Low-density lipoprotein receptor class A domain-containing protein 4 (306 aa).

Over 1–64 (MPEAGFQATN…PPGIFNSELE (64 aa)) the chain is Lumenal. Positions 16-48 (KFTCTSGKCLYLGSLVCNQQNDCGDNSDEENCL) constitute an LDL-receptor class A domain. 2 disulfides stabilise this stretch: cysteine 19–cysteine 38 and cysteine 32–cysteine 47. Residues 65-85 (FAQIIIIVVVVTVMVVVIVCL) traverse the membrane as a helical segment. The Cytoplasmic portion of the chain corresponds to 86 to 306 (LNHYKVSTRS…GKDRKPGNLV (221 aa)). The PPxY motif 1 motif lies at 180 to 183 (PPPY). An SMAD interaction motif (SIM) motif is present at residues 208-211 (PPNR). The PPxY motif 2 motif lies at 252-255 (PPTY). Residues 286-306 (NNAESTIVPIKGKDRKPGNLV) form a disordered region. Over residues 296–306 (KGKDRKPGNLV) the composition is skewed to basic and acidic residues.

It belongs to the PMEPA1 family. As to quaternary structure, interacts with PMEPA1. Interacts (via the SMAD interaction motif) with SMAD2 and SMAD3. Expressed in lymphocytes.

Its subcellular location is the early endosome membrane. Functionally, functions as a negative regulator of TGF-beta signaling and thereby probably plays a role in cell proliferation, differentiation, apoptosis, motility, extracellular matrix production and immunosuppression. In the canonical TGF-beta pathway, ZFYVE9/SARA recruits the intracellular signal transducer and transcriptional modulators SMAD2 and SMAD3 to the TGF-beta receptor. Phosphorylated by the receptor, SMAD2 and SMAD3 then form a heteromeric complex with SMAD4 that translocates to the nucleus to regulate transcription. Through interaction with SMAD2 and SMAD3, LDLRAD4 may compete with ZFYVE9 and SMAD4 and prevent propagation of the intracellular signal. In Homo sapiens (Human), this protein is Low-density lipoprotein receptor class A domain-containing protein 4 (LDLRAD4).